The sequence spans 182 residues: uncharacterized protein (182 aa).

A run of 4 helical transmembrane segments spans residues 19-39 (LFGI…SIVS), 51-71 (IYLV…VVFI), 87-107 (IFTV…IELF), and 118-138 (CSPF…LAMC).

It localises to the membrane. This is an uncharacterized protein from Caenorhabditis elegans.